Consider the following 122-residue polypeptide: High-potential iron-sulfur protein (122 aa).

The first 37 residues, 1–37 (MSDKPISKSRRDAVKVMLGTAAAIPMINLVGFGTARA), serve as a signal peptide directing secretion. Positions 80, 83, 100, and 114 each coordinate [4Fe-4S] cluster.

Belongs to the high-potential iron-sulfur protein (HiPIP) family. In terms of assembly, homodimer.

It localises to the periplasm. Its function is as follows. Specific class of high-redox-potential 4Fe-4S ferredoxins. Functions in anaerobic electron transport in most purple and in some other photosynthetic bacteria and in at least one genus (Paracoccus) of halophilic, denitrifying bacteria. This is High-potential iron-sulfur protein (hip) from Allochromatium vinosum (strain ATCC 17899 / DSM 180 / NBRC 103801 / NCIMB 10441 / D) (Chromatium vinosum).